The chain runs to 201 residues: Recombination protein RecR (201 aa).

Residues 60 to 75 (CSVCGNVDTIDPCSIC) form a C4-type zinc finger. One can recognise a Toprim domain in the interval 83–178 (ATIIVVEDIA…KVTRLAHGVP (96 aa)).

This sequence belongs to the RecR family.

Its function is as follows. May play a role in DNA repair. It seems to be involved in an RecBC-independent recombinational process of DNA repair. It may act with RecF and RecO. This chain is Recombination protein RecR, found in Bartonella henselae (strain ATCC 49882 / DSM 28221 / CCUG 30454 / Houston 1) (Rochalimaea henselae).